The chain runs to 362 residues: Adenosine deaminase (362 aa).

Positions 19 and 21 each coordinate Zn(2+). Residues histidine 21, aspartate 23, and glycine 181 each contribute to the substrate site. Histidine 208 contributes to the Zn(2+) binding site. Glutamate 211 serves as the catalytic Proton donor. Aspartate 300 contacts Zn(2+).

It belongs to the metallo-dependent hydrolases superfamily. Adenosine and AMP deaminases family. Adenosine deaminase subfamily. It depends on Zn(2+) as a cofactor.

It carries out the reaction adenosine + H2O + H(+) = inosine + NH4(+). It catalyses the reaction 2'-deoxyadenosine + H2O + H(+) = 2'-deoxyinosine + NH4(+). In terms of biological role, catalyzes the hydrolytic deamination of adenosine and 2-deoxyadenosine. This is Adenosine deaminase from Mycobacterium sp. (strain MCS).